A 340-amino-acid polypeptide reads, in one-letter code: Protein arginine N-methyltransferase 1 (340 aa).

The SAM-dependent MTase PRMT-type domain occupies 16–311; the sequence is KDYYFDSYSH…TCKPAEGNHR (296 aa). Phosphotyrosine is present on Tyr19. S-adenosyl-L-methionine-binding residues include His29, Arg38, Gly62, Asp84, and Glu113. Active-site residues include Glu128 and Glu137. A Phosphoserine modification is found at Ser176.

It belongs to the class I-like SAM-binding methyltransferase superfamily. Protein arginine N-methyltransferase family. In terms of assembly, interacts with pab2.

It is found in the nucleus. The catalysed reaction is L-arginyl-[protein] + S-adenosyl-L-methionine = N(omega)-methyl-L-arginyl-[protein] + S-adenosyl-L-homocysteine + H(+). The enzyme catalyses L-arginyl-[protein] + 2 S-adenosyl-L-methionine = N(omega),N(omega)-dimethyl-L-arginyl-[protein] + 2 S-adenosyl-L-homocysteine + 2 H(+). Functionally, S-adenosyl-L-methionine-dependent protein-arginine N-methyltransferase that catalyzes both the mono- and asymmetric (type I) dimethylation of the guanidino nitrogens of arginine residues in target proteins. Asymmetrically dimethylates the polyadenylate-binding protein pab2, modulating pab2 oligomerization. The sequence is that of Protein arginine N-methyltransferase 1 from Schizosaccharomyces pombe (strain 972 / ATCC 24843) (Fission yeast).